The sequence spans 86 residues: OMEGA-stichotoxin-Shd4a (86 aa).

The signal sequence occupies residues methionine 1 to alanine 23. A propeptide spanning residues arginine 24–asparagine 36 is cleaved from the precursor. Residues glutamate 40–aspartate 82 enclose the EGF-like domain. 3 cysteine pairs are disulfide-bonded: cysteine 44/cysteine 59, cysteine 53/cysteine 70, and cysteine 72/cysteine 81.

The protein belongs to the EGF domain peptide family.

It is found in the secreted. The protein resides in the nematocyst. Has both toxic and EGF activity. Its EGF activity consists of rounding cells (morphological change) and inducing tyrosine phosphorylation of the EGFR in A431 cells, but with a lower potency that human EGF. This chain is OMEGA-stichotoxin-Shd4a, found in Stichodactyla haddoni (Saddle carpet anemone).